A 235-amino-acid chain; its full sequence is Ornithine decarboxylase antizyme 3 (235 aa).

A phosphoserine mark is found at serine 9 and serine 12.

It belongs to the ODC antizyme family. Interacts with ODC1 and thereby sterically blocks ODC homodimerization. Interacts with AZIN2; this interaction disrupts the interaction between the antizyme and ODC1. Interacts with GGN. Testis specific.

The protein resides in the nucleus. It is found in the cytoplasm. Functionally, ornithine decarboxylase (ODC) antizyme protein that negatively regulates ODC activity and intracellular polyamine biosynthesis and uptake in response to increased intracellular polyamine levels. Binds to ODC monomers, inhibiting the assembly of the functional ODC homodimers. Does not target the ODC monomers for degradation, which allows a protein synthesis-independent restoration of ODC activity. Stabilizes AZIN2 by interfering with its ubiquitination. Involved in the translocation of AZNI2 from ER-Golgi intermediate compartment (ERGIC) to the cytosol. Probably plays a key role in spermatogenesis by regulating the intracellular concentration of polyamines in haploid germ cells. The protein is Ornithine decarboxylase antizyme 3 (OAZ3) of Homo sapiens (Human).